A 311-amino-acid chain; its full sequence is Aspartate carbamoyltransferase catalytic subunit (311 aa).

Carbamoyl phosphate-binding residues include Arg55 and Thr56. Residue Lys85 participates in L-aspartate binding. Carbamoyl phosphate-binding residues include Arg106, His135, and Gln138. L-aspartate-binding residues include Arg168 and Arg230. Carbamoyl phosphate contacts are provided by Leu268 and Pro269.

This sequence belongs to the aspartate/ornithine carbamoyltransferase superfamily. ATCase family. As to quaternary structure, heterododecamer (2C3:3R2) of six catalytic PyrB chains organized as two trimers (C3), and six regulatory PyrI chains organized as three dimers (R2).

The enzyme catalyses carbamoyl phosphate + L-aspartate = N-carbamoyl-L-aspartate + phosphate + H(+). Its pathway is pyrimidine metabolism; UMP biosynthesis via de novo pathway; (S)-dihydroorotate from bicarbonate: step 2/3. Catalyzes the condensation of carbamoyl phosphate and aspartate to form carbamoyl aspartate and inorganic phosphate, the committed step in the de novo pyrimidine nucleotide biosynthesis pathway. The sequence is that of Aspartate carbamoyltransferase catalytic subunit from Yersinia pseudotuberculosis serotype IB (strain PB1/+).